We begin with the raw amino-acid sequence, 337 residues long: Basic membrane protein A2 (337 aa).

Residues 1–17 (MNKLLLLILFECIIFLS) form the signal peptide. The N-palmitoyl cysteine moiety is linked to residue Cys18. The S-diacylglycerol cysteine moiety is linked to residue Cys18.

Belongs to the BMP lipoprotein family. As to quaternary structure, monomer.

Its subcellular location is the cell inner membrane. In terms of biological role, immunogenic protein. May be part of an ABC-type nucleoside uptake system involved in the purine salvage pathway. The chain is Basic membrane protein A2 (bmpA2) from Borrelia garinii subsp. bavariensis (strain ATCC BAA-2496 / DSM 23469 / PBi) (Borreliella bavariensis).